We begin with the raw amino-acid sequence, 404 residues long: Cysteine desulfurase IscS (404 aa).

Pyridoxal 5'-phosphate-binding positions include 73-74, Asn-153, Gln-181, and 201-203; these read AT and SAH. The residue at position 204 (Lys-204) is an N6-(pyridoxal phosphate)lysine. Thr-241 is a pyridoxal 5'-phosphate binding site. Catalysis depends on Cys-327, which acts as the Cysteine persulfide intermediate. A [2Fe-2S] cluster-binding site is contributed by Cys-327.

Belongs to the class-V pyridoxal-phosphate-dependent aminotransferase family. NifS/IscS subfamily. In terms of assembly, homodimer. Forms a heterotetramer with IscU, interacts with other sulfur acceptors. Pyridoxal 5'-phosphate serves as cofactor.

Its subcellular location is the cytoplasm. The catalysed reaction is (sulfur carrier)-H + L-cysteine = (sulfur carrier)-SH + L-alanine. Its pathway is cofactor biosynthesis; iron-sulfur cluster biosynthesis. In terms of biological role, master enzyme that delivers sulfur to a number of partners involved in Fe-S cluster assembly, tRNA modification or cofactor biosynthesis. Catalyzes the removal of elemental sulfur atoms from cysteine to produce alanine. Functions as a sulfur delivery protein for Fe-S cluster synthesis onto IscU, an Fe-S scaffold assembly protein, as well as other S acceptor proteins. The sequence is that of Cysteine desulfurase IscS from Anaeromyxobacter dehalogenans (strain 2CP-C).